Reading from the N-terminus, the 356-residue chain is Nicotinate-nucleotide--dimethylbenzimidazole phosphoribosyltransferase (356 aa).

The Proton acceptor role is filled by glutamate 317.

It belongs to the CobT family. In terms of assembly, homodimer.

It carries out the reaction 5,6-dimethylbenzimidazole + nicotinate beta-D-ribonucleotide = alpha-ribazole 5'-phosphate + nicotinate + H(+). It functions in the pathway nucleoside biosynthesis; alpha-ribazole biosynthesis; alpha-ribazole from 5,6-dimethylbenzimidazole: step 1/2. Catalyzes the synthesis of alpha-ribazole-5'-phosphate from nicotinate mononucleotide (NAMN) and 5,6-dimethylbenzimidazole (DMB). This is Nicotinate-nucleotide--dimethylbenzimidazole phosphoribosyltransferase from Salmonella gallinarum (strain 287/91 / NCTC 13346).